The sequence spans 129 residues: Small ribosomal subunit protein uS11 (129 aa).

It belongs to the universal ribosomal protein uS11 family. In terms of assembly, part of the 30S ribosomal subunit. Interacts with proteins S7 and S18. Binds to IF-3.

Functionally, located on the platform of the 30S subunit, it bridges several disparate RNA helices of the 16S rRNA. Forms part of the Shine-Dalgarno cleft in the 70S ribosome. The polypeptide is Small ribosomal subunit protein uS11 (Xanthobacter autotrophicus (strain ATCC BAA-1158 / Py2)).